The chain runs to 435 residues: BAHD acyltransferase BIA1 (435 aa).

Active-site proton acceptor residues include histidine 151 and aspartate 369.

The protein belongs to the plant acyltransferase family. Mostly expressed in roots (particularly in the root elongation zone), and, to a lower extent, in seedling, leaves (especially in hydathodes), siliques (e.g. in developing seeds) and flowers.

Its subcellular location is the cytoplasm. Functionally, monitors brassinosteroids (BR) responses and homeostasis, particularly in the root and hypocotyl in darkness. Promotes flavonoid biosynthesis. This chain is BAHD acyltransferase BIA1, found in Arabidopsis thaliana (Mouse-ear cress).